Consider the following 278-residue polypeptide: Putative cuticle collagen 91 (278 aa).

2 disordered regions span residues 84 to 109 (LAKNCPPGPPGPPGAPGAAGEPGVDG) and 140 to 278 (GPAG…SVRQ). Positions 89–98 (PPGPPGPPGA) are enriched in pro residues. Triple-helical region stretches follow at residues 91–120 (GPPGPPGAPGAAGEPGVDGDAGAAGIDGVA), 137–199 (GEAG…NGQR), and 202–264 (GTPG…PGPD). Residues 99 to 109 (PGAAGEPGVDG) show a composition bias toward low complexity. Over residues 158–167 (GADGQGGAPG) the composition is skewed to gly residues. Composition is skewed to low complexity over residues 172–228 (EGPA…AGAP) and 236–245 (APGVDGQPGA).

It belongs to the cuticular collagen family. As to quaternary structure, collagen polypeptide chains are complexed within the cuticle by disulfide bonds and other types of covalent cross-links.

Its function is as follows. Nematode cuticles are composed largely of collagen-like proteins. The cuticle functions both as an exoskeleton and as a barrier to protect the worm from its environment. The polypeptide is Putative cuticle collagen 91 (col-91) (Caenorhabditis elegans).